Consider the following 201-residue polypeptide: Xanthine phosphoribosyltransferase (201 aa).

Xanthine contacts are provided by leucine 20 and asparagine 27. 129–133 (ANGQA) lines the 5-phospho-alpha-D-ribose 1-diphosphate pocket. Residue lysine 157 coordinates xanthine.

This sequence belongs to the purine/pyrimidine phosphoribosyltransferase family. Xpt subfamily. Homodimer.

Its subcellular location is the cytoplasm. The enzyme catalyses XMP + diphosphate = xanthine + 5-phospho-alpha-D-ribose 1-diphosphate. It functions in the pathway purine metabolism; XMP biosynthesis via salvage pathway; XMP from xanthine: step 1/1. Its function is as follows. Converts the preformed base xanthine, a product of nucleic acid breakdown, to xanthosine 5'-monophosphate (XMP), so it can be reused for RNA or DNA synthesis. This chain is Xanthine phosphoribosyltransferase, found in Shouchella clausii (strain KSM-K16) (Alkalihalobacillus clausii).